The sequence spans 236 residues: MRVTQLSSQSFIFPSPELALREPNGLLALGGDLTAPRLLAAYQRGIFPWFNPGEMILWWSPDPRAVLFPEDLHISRSMRRFIRHCPYRFTLNHAFADVISACATERDEGTWIGRDVQQAYCQLHALGHAHSLEVWLENELVGGLYGVAVGAVFCGESMFSRADNASKSALMVFCHHFTQHGGELIDCQVLNAHTASLGAVEIPRNFFLQQLSQLQFSPLPAECWLPQSLNFSSAMQ.

It belongs to the L/F-transferase family.

The protein resides in the cytoplasm. The catalysed reaction is N-terminal L-lysyl-[protein] + L-leucyl-tRNA(Leu) = N-terminal L-leucyl-L-lysyl-[protein] + tRNA(Leu) + H(+). It carries out the reaction N-terminal L-arginyl-[protein] + L-leucyl-tRNA(Leu) = N-terminal L-leucyl-L-arginyl-[protein] + tRNA(Leu) + H(+). It catalyses the reaction L-phenylalanyl-tRNA(Phe) + an N-terminal L-alpha-aminoacyl-[protein] = an N-terminal L-phenylalanyl-L-alpha-aminoacyl-[protein] + tRNA(Phe). Its function is as follows. Functions in the N-end rule pathway of protein degradation where it conjugates Leu, Phe and, less efficiently, Met from aminoacyl-tRNAs to the N-termini of proteins containing an N-terminal arginine or lysine. The protein is Leucyl/phenylalanyl-tRNA--protein transferase of Yersinia pseudotuberculosis serotype O:1b (strain IP 31758).